The sequence spans 297 residues: N-acetylneuraminate lyase (297 aa).

2 residues coordinate aceneuramate: Ser-47 and Thr-48. Tyr-137 functions as the Proton donor in the catalytic mechanism. Lys-165 functions as the Schiff-base intermediate with substrate in the catalytic mechanism. Residues Thr-167, Gly-189, Asp-191, Glu-192, and Ser-208 each coordinate aceneuramate.

Belongs to the DapA family. NanA subfamily. Homotetramer.

It localises to the cytoplasm. The catalysed reaction is aceneuramate = aldehydo-N-acetyl-D-mannosamine + pyruvate. The protein operates within amino-sugar metabolism; N-acetylneuraminate degradation; D-fructose 6-phosphate from N-acetylneuraminate: step 1/5. Functionally, catalyzes the reversible aldol cleavage of N-acetylneuraminic acid (sialic acid; Neu5Ac) to form pyruvate and N-acetylmannosamine (ManNAc) via a Schiff base intermediate. The polypeptide is N-acetylneuraminate lyase (Escherichia coli (strain SE11)).